Reading from the N-terminus, the 463-residue chain is L-seryl-tRNA(Sec) selenium transferase (463 aa).

Lys295 carries the N6-(pyridoxal phosphate)lysine modification.

This sequence belongs to the SelA family. In terms of assembly, homodecamer; pentamer of dimers. Binds only one seryl-tRNA(Sec) per dimer. Pyridoxal 5'-phosphate serves as cofactor.

Its subcellular location is the cytoplasm. It carries out the reaction L-seryl-tRNA(Sec) + selenophosphate + H(+) = L-selenocysteinyl-tRNA(Sec) + phosphate. It participates in aminoacyl-tRNA biosynthesis; selenocysteinyl-tRNA(Sec) biosynthesis; selenocysteinyl-tRNA(Sec) from L-seryl-tRNA(Sec) (bacterial route): step 1/1. Converts seryl-tRNA(Sec) to selenocysteinyl-tRNA(Sec) required for selenoprotein biosynthesis. The protein is L-seryl-tRNA(Sec) selenium transferase of Salmonella arizonae (strain ATCC BAA-731 / CDC346-86 / RSK2980).